A 268-amino-acid polypeptide reads, in one-letter code: Enoyl-[acyl-carrier-protein] reductase [NADH] 2 (268 aa).

NAD(+) is bound by residues G14, 20–21, Q41, 65–66, and I93; these read SI and DV. Catalysis depends on proton acceptor residues Y146 and Y156. NAD(+) contacts are provided by residues K163 and 192–196; that span reads IRTLA.

The protein belongs to the short-chain dehydrogenases/reductases (SDR) family. FabI subfamily.

It is found in the cell inner membrane. The enzyme catalyses a 2,3-saturated acyl-[ACP] + NAD(+) = a (2E)-enoyl-[ACP] + NADH + H(+). The protein operates within lipid metabolism; fatty acid biosynthesis. In Rhizobium meliloti (strain 1021) (Ensifer meliloti), this protein is Enoyl-[acyl-carrier-protein] reductase [NADH] 2 (fabI2).